The chain runs to 469 residues: Acetyl-CoA decarbonylase/synthase complex subunit beta 1 (469 aa).

The [Ni-Fe-S] cluster site is built by Cys189, Cys192, Cys278, and Cys280.

Belongs to the CdhC family. Monomer. The ACDS complex is made up of alpha, epsilon, beta, gamma and delta chains with a probable stoichiometry of (alpha(2)epsilon(2))(4)-beta(8)-(gamma(1)delta(1))(8) (Potential). [Ni-Fe-S] cluster is required as a cofactor.

It carries out the reaction Co(I)-[corrinoid Fe-S protein] + acetyl-CoA + H(+) = methyl-Co(III)-[corrinoid Fe-S protein] + CO + CoA. Its pathway is one-carbon metabolism; methanogenesis from acetate. Its function is as follows. Part of a complex that catalyzes the reversible cleavage of acetyl-CoA, allowing growth on acetate as sole source of carbon and energy. The alpha-epsilon complex generates CO from CO(2), while the beta subunit (this protein) combines the CO with CoA and a methyl group to form acetyl-CoA. The methyl group, which is incorporated into acetyl-CoA, is transferred to the beta subunit by a corrinoid iron-sulfur protein (the gamma-delta complex). This Methanosarcina mazei (strain ATCC BAA-159 / DSM 3647 / Goe1 / Go1 / JCM 11833 / OCM 88) (Methanosarcina frisia) protein is Acetyl-CoA decarbonylase/synthase complex subunit beta 1 (cdhC1).